We begin with the raw amino-acid sequence, 171 residues long: Phosphopantetheine adenylyltransferase (171 aa).

Thr9 provides a ligand contact to substrate. ATP is bound by residues 9-10 (TF) and His17. Substrate is bound by residues Lys41, Leu73, and Arg87. Residues 88 to 90 (GLR), Glu98, and 123 to 129 (YQFISGT) contribute to the ATP site.

This sequence belongs to the bacterial CoaD family. As to quaternary structure, homohexamer. Requires Mg(2+) as cofactor.

The protein resides in the cytoplasm. The enzyme catalyses (R)-4'-phosphopantetheine + ATP + H(+) = 3'-dephospho-CoA + diphosphate. It functions in the pathway cofactor biosynthesis; coenzyme A biosynthesis; CoA from (R)-pantothenate: step 4/5. Its function is as follows. Reversibly transfers an adenylyl group from ATP to 4'-phosphopantetheine, yielding dephospho-CoA (dPCoA) and pyrophosphate. This Paraburkholderia phytofirmans (strain DSM 17436 / LMG 22146 / PsJN) (Burkholderia phytofirmans) protein is Phosphopantetheine adenylyltransferase.